The chain runs to 202 residues: Dephospho-CoA kinase (202 aa).

Residues 4–202 (VIGLTGGIAT…TDKGFINKER (199 aa)) form the DPCK domain. 12-17 (ATGKST) serves as a coordination point for ATP.

This sequence belongs to the CoaE family.

It is found in the cytoplasm. It catalyses the reaction 3'-dephospho-CoA + ATP = ADP + CoA + H(+). It functions in the pathway cofactor biosynthesis; coenzyme A biosynthesis; CoA from (R)-pantothenate: step 5/5. Functionally, catalyzes the phosphorylation of the 3'-hydroxyl group of dephosphocoenzyme A to form coenzyme A. The chain is Dephospho-CoA kinase from Staphylococcus haemolyticus (strain JCSC1435).